A 1374-amino-acid chain; its full sequence is Y' element ATP-dependent helicase YLL067C (1374 aa).

The disordered stretch occupies residues 321–345 (AGEAASSDHDQKISRVTRKRPREPK). Residues 375–552 (EIYMADTPSV…LQRIGLTGLA (178 aa)) form the Helicase ATP-binding domain. 388–395 (APPGYGKT) provides a ligand contact to ATP. The short motif at 498-501 (DEFH) is the DEAH box element. The region spanning 609-758 (KLLLALFEIE…EFYGLESKKG (150 aa)) is the Helicase C-terminal domain. Low complexity predominate over residues 832-1011 (ANASTNATTN…ATTTESTNAS (180 aa)). Positions 832–1035 (ANASTNATTN…RFHPVTDINK (204 aa)) are disordered. Residues 1012 to 1035 (AKEDANKDGNAEDNRFHPVTDINK) show a composition bias toward basic and acidic residues.

It belongs to the helicase family. Yeast subtelomeric Y' repeat subfamily.

Its function is as follows. Catalyzes DNA unwinding and is involved in telomerase-independent telomere maintenance. The sequence is that of Y' element ATP-dependent helicase YLL067C from Saccharomyces cerevisiae (strain ATCC 204508 / S288c) (Baker's yeast).